We begin with the raw amino-acid sequence, 226 residues long: ATP synthase subunit a (226 aa).

A run of 5 helical transmembrane segments spans residues phenylalanine 17–alanine 37, leucine 78–phenylalanine 98, asparagine 104–isoleucine 124, leucine 175–leucine 195, and phenylalanine 201–leucine 221.

The protein belongs to the ATPase A chain family. As to quaternary structure, F-type ATPases have 2 components, CF(1) - the catalytic core - and CF(0) - the membrane proton channel. CF(1) has five subunits: alpha(3), beta(3), gamma(1), delta(1), epsilon(1). CF(0) has three main subunits: a(1), b(2) and c(9-12). The alpha and beta chains form an alternating ring which encloses part of the gamma chain. CF(1) is attached to CF(0) by a central stalk formed by the gamma and epsilon chains, while a peripheral stalk is formed by the delta and b chains.

Its subcellular location is the cell inner membrane. Key component of the proton channel; it plays a direct role in the translocation of protons across the membrane. This Nitratiruptor sp. (strain SB155-2) protein is ATP synthase subunit a.